Consider the following 453-residue polypeptide: Beta-agarase AgaB34 (453 aa).

The signal sequence occupies residues 1–23 (MKGFTKHSILMACSIGLAINATA). The 278-residue stretch at 24-301 (ADWDNIPIPA…WIRVYKPTGG (278 aa)) folds into the GH16 domain. The active-site Nucleophile is Glu-147. The Proton donor role is filled by Glu-152. One can recognise a Ricin B-type lectin domain in the interval 313–453 (PSGYTNLQLA…GATNQRFKFL (141 aa)). 3 cysteine pairs are disulfide-bonded: Cys-327–Cys-346, Cys-375–Cys-394, and Cys-423–Cys-442.

The protein belongs to the glycosyl hydrolase 16 family.

It localises to the secreted. The enzyme catalyses Hydrolysis of (1-&gt;4)-beta-D-galactosidic linkages in agarose, giving the tetramer as the predominant product.. In Agarivorans albus, this protein is Beta-agarase AgaB34.